We begin with the raw amino-acid sequence, 301 residues long: Protoheme IX farnesyltransferase (301 aa).

A run of 9 helical transmembrane segments spans residues 20–42 (FTEL…GMWL), 55–75 (VDVI…SGAF), 105–125 (ALMV…MTTW), 126–146 (QAGV…SLYA), 150–172 (LVSN…WFAV), 176–198 (FSIV…FYAI), 227–247 (MFFW…LGIV), 249–269 (VILA…GFKM), and 280–300 (FVYS…ISIF).

This sequence belongs to the UbiA prenyltransferase family. Protoheme IX farnesyltransferase subfamily. In terms of assembly, interacts with CtaA.

The protein localises to the cell membrane. It carries out the reaction heme b + (2E,6E)-farnesyl diphosphate + H2O = Fe(II)-heme o + diphosphate. It functions in the pathway porphyrin-containing compound metabolism; heme O biosynthesis; heme O from protoheme: step 1/1. In terms of biological role, converts heme B (protoheme IX) to heme O by substitution of the vinyl group on carbon 2 of heme B porphyrin ring with a hydroxyethyl farnesyl side group. This Listeria monocytogenes serovar 1/2a (strain ATCC BAA-679 / EGD-e) protein is Protoheme IX farnesyltransferase.